The primary structure comprises 267 residues: Mitochondrial S-adenosylmethionine carrier protein (267 aa).

Solcar repeat units lie at residues 4 to 77 (REFT…TKSV), 86 to 168 (LAPI…LKAV), and 177 to 265 (LDSW…VRRT). The next 6 membrane-spanning stretches (helical) occupy residues 5 to 25 (EFTASLVAGGCAGMCVDLTLF), 49 to 69 (IYAGVPSAAIGSFPNAAAFFV), 85 to 105 (NLAPITHMLAASLGEIVACLI), 142 to 162 (RGYGSTVLREIPFSLVQFPLW), 182 to 202 (AAVCGALAGGVAAFVTTPLDV), and 238 to 258 (FAGSIPRVMFISMGGFIFLGA).

Belongs to the mitochondrial carrier (TC 2.A.29) family.

It is found in the mitochondrion inner membrane. It carries out the reaction S-adenosyl-L-homocysteine(out) + S-adenosyl-L-methionine(in) = S-adenosyl-L-homocysteine(in) + S-adenosyl-L-methionine(out). In terms of biological role, mitochondrial S-adenosyl-L-methionine/S-adenosyl-L-homocysteine antiporter. Mediates the exchange of cytosolic S-adenosyl-L-methionine, the predominant methyl-group donor for macromolecule methylation processes, for mitochondrial S-adenosylhomocysteine(SAH), a by-product of methylation reactions. This is Mitochondrial S-adenosylmethionine carrier protein (slc25a26) from Danio rerio (Zebrafish).